Reading from the N-terminus, the 276-residue chain is Diaminopimelate epimerase (276 aa).

The substrate site is built by N13, Q46, and N66. C75 functions as the Proton donor in the catalytic mechanism. Residues 76–77 (GN), N159, N192, and 210–211 (ER) each bind substrate. C219 functions as the Proton acceptor in the catalytic mechanism. 220 to 221 (GT) serves as a coordination point for substrate.

Belongs to the diaminopimelate epimerase family. As to quaternary structure, homodimer.

It localises to the cytoplasm. It carries out the reaction (2S,6S)-2,6-diaminopimelate = meso-2,6-diaminopimelate. It participates in amino-acid biosynthesis; L-lysine biosynthesis via DAP pathway; DL-2,6-diaminopimelate from LL-2,6-diaminopimelate: step 1/1. Its function is as follows. Catalyzes the stereoinversion of LL-2,6-diaminopimelate (L,L-DAP) to meso-diaminopimelate (meso-DAP), a precursor of L-lysine and an essential component of the bacterial peptidoglycan. The chain is Diaminopimelate epimerase from Pseudomonas aeruginosa (strain LESB58).